The chain runs to 1402 residues: Defective in tip formation protein A (1402 aa).

4 disordered regions span residues 1-20, 37-94, 109-133, and 210-292; these read MKDIEASKKPHTTTVAPPQI, NVTT…PQIV, NTPSLSSTPSPLPNNNNSNENDNDI, and KQSS…RRLK. A run of 2 repeats spans residues 12 to 18 and 40 to 46. Residues 12–92 are 4 X 7 AA repeat of T-T-T-[IV]-[AQ]-P-P; it reads TTTVAPPQIN…TTTTTVQPPQ (81 aa). The segment covering 38–47 has biased composition (low complexity); the sequence is VTTTTVQPPQ. A compositionally biased stretch (pro residues) spans 48–58; the sequence is IVSPPSPPSPP. Positions 59 to 94 are enriched in low complexity; it reads QTTTIAPPTILPTTKTTTTTTTTTTTTTTVQPPQIV. A run of 2 repeats spans residues 60 to 66 and 86 to 92. The segment covering 210 to 234 has biased composition (low complexity); the sequence is KQSSQSQLQQQLSSQSLQQIQQKSK. Residues 235 to 253 are compositionally biased toward pro residues; it reads QPPPQQQQQQQPPPPPIPL. The segment covering 254–279 has biased composition (low complexity); that stretch reads LPQIHQQLKPKQQQEQQQQQEQQQQQ. Positions 350–383 form a coiled coil; the sequence is QRIKSFIENHKKKKQKYREYQSEKNQQQKSNSKK. Disordered regions lie at residues 429–453 and 712–745; these read DQQQQQQQQQQSTMTTTSSSSSPMT and NNNNNNINNNNNNNNNNNNNNNNNNNNNNSNLSN. A compositionally biased stretch (low complexity) spans 430–453; the sequence is QQQQQQQQQQSTMTTTSSSSSPMT.

Its subcellular location is the cell surface. Its function is as follows. Required for correct organization of the actin cytoskeleton and cytokinesis. Also required for apical sorting of prestalk cells, a prerequisite for formation of the tip at the mound stage and subsequent formation of the fruiting body. May be required for cell adhesion. This Dictyostelium discoideum (Social amoeba) protein is Defective in tip formation protein A (dtfA).